A 179-amino-acid chain; its full sequence is ATP synthase subunit delta (179 aa).

It belongs to the ATPase delta chain family. F-type ATPases have 2 components, F(1) - the catalytic core - and F(0) - the membrane proton channel. F(1) has five subunits: alpha(3), beta(3), gamma(1), delta(1), epsilon(1). F(0) has three main subunits: a(1), b(2) and c(10-14). The alpha and beta chains form an alternating ring which encloses part of the gamma chain. F(1) is attached to F(0) by a central stalk formed by the gamma and epsilon chains, while a peripheral stalk is formed by the delta and b chains.

Its subcellular location is the cell membrane. In terms of biological role, f(1)F(0) ATP synthase produces ATP from ADP in the presence of a proton or sodium gradient. F-type ATPases consist of two structural domains, F(1) containing the extramembraneous catalytic core and F(0) containing the membrane proton channel, linked together by a central stalk and a peripheral stalk. During catalysis, ATP synthesis in the catalytic domain of F(1) is coupled via a rotary mechanism of the central stalk subunits to proton translocation. Its function is as follows. This protein is part of the stalk that links CF(0) to CF(1). It either transmits conformational changes from CF(0) to CF(1) or is implicated in proton conduction. The polypeptide is ATP synthase subunit delta (Staphylococcus aureus (strain USA300 / TCH1516)).